Consider the following 582-residue polypeptide: Inositol transporter 4 (582 aa).

The next 12 helical transmembrane spans lie at 35–55 (GIGGLLFGYDTGVISGALLFI), 70–90 (STIVSMAVAGAIVGAAVGGWI), 105–125 (VLFLIGAIVMAFAPAPWVIIV), 128–148 (IFVGFGVGMASMTSPLYISEA), 162–182 (GLLITGGQFFSYLINLAFVHT), 188–208 (WMLGVAGVPAIVQFVLMLSLP), 290–310 (FVGINTVMYYSPSIVQFAGYA), 317–337 (ALSLITSGLNALGSIVSMMFV), 345–365 (LMIISMFGIIACLIILATVFS), 456–476 (FGFLAIVFLGLYIVVYAPGMG), 494–514 (LGGGIAAVSNWVSNLIVSESF), and 525–545 (GTFLLFAGFSTIGLFFIWLLV).

It belongs to the major facilitator superfamily. Sugar transporter (TC 2.A.1.1) family. Highly expressed in pollen and phloem companion cells.

Its subcellular location is the cell membrane. Plasma membrane inositol-proton symporter. Mediates high-affinity myoinositol-proton symport across the plasma membrane. Active with myoinositol, scylloinositol and D-chiroinositol. Low activity with mucoinositol and alloinositol. The chain is Inositol transporter 4 (INT4) from Arabidopsis thaliana (Mouse-ear cress).